Consider the following 405-residue polypeptide: Arginine deiminase (405 aa).

C395 acts as the Amidino-cysteine intermediate in catalysis.

It belongs to the arginine deiminase family.

The protein localises to the cytoplasm. The catalysed reaction is L-arginine + H2O = L-citrulline + NH4(+). The protein operates within amino-acid degradation; L-arginine degradation via ADI pathway; carbamoyl phosphate from L-arginine: step 1/2. In Rhodococcus jostii (strain RHA1), this protein is Arginine deiminase.